Here is a 416-residue protein sequence, read N- to C-terminus: UDP-N-acetylglucosamine 1-carboxyvinyltransferase (416 aa).

22 to 23 (KN) lines the phosphoenolpyruvate pocket. Residue arginine 92 participates in UDP-N-acetyl-alpha-D-glucosamine binding. Residue cysteine 116 is the Proton donor of the active site. Residue cysteine 116 is modified to 2-(S-cysteinyl)pyruvic acid O-phosphothioketal. Residues 121 to 125 (RPVDQ), aspartate 304, and isoleucine 326 each bind UDP-N-acetyl-alpha-D-glucosamine.

The protein belongs to the EPSP synthase family. MurA subfamily.

It localises to the cytoplasm. The catalysed reaction is phosphoenolpyruvate + UDP-N-acetyl-alpha-D-glucosamine = UDP-N-acetyl-3-O-(1-carboxyvinyl)-alpha-D-glucosamine + phosphate. It functions in the pathway cell wall biogenesis; peptidoglycan biosynthesis. Cell wall formation. Adds enolpyruvyl to UDP-N-acetylglucosamine. The protein is UDP-N-acetylglucosamine 1-carboxyvinyltransferase of Cupriavidus metallidurans (strain ATCC 43123 / DSM 2839 / NBRC 102507 / CH34) (Ralstonia metallidurans).